Reading from the N-terminus, the 1988-residue chain is Protein Ycf2 (1988 aa).

1337–1344 is a binding site for ATP; the sequence is GSIGTGRS. Residues 1377–1396 form a disordered region; that stretch reads SDDDSDDIDDSGDIDDSDDI.

Belongs to the Ycf2 family.

Its subcellular location is the plastid. The protein resides in the chloroplast stroma. Its function is as follows. Probable ATPase of unknown function. Its presence in a non-photosynthetic plant (Epifagus virginiana) and experiments in tobacco indicate that it has an essential function which is probably not related to photosynthesis. The protein is Protein Ycf2 of Cucumis sativus (Cucumber).